The sequence spans 1712 residues: Collagen alpha-2(IV) chain (1712 aa).

An N-terminal signal peptide occupies residues 1 to 25; it reads MGRDQRAVAGPALRRWLLLGTVTVG. The propeptide at 26-183 is N-terminal propeptide (7S domain); that stretch reads FLAQSVLAGV…LPKEERDRYR (158 aa). Disordered stretches follow at residues 60 to 237, 302 to 448, 507 to 640, 690 to 906, and 1157 to 1480; these read RGQP…GFYG, GLRG…PDGF, INGE…DAGL, GLPG…SPGF, and TGPP…GLPG. Over residues 68–84 the composition is skewed to low complexity; the sequence is PQGYNGPPGLQGFPGLQ. The span at 121–130 shows a compositional bias: gly residues; the sequence is GHPGQGGPRG. An N-linked (GlcNAc...) asparagine glycan is attached at N138. Positions 140–153 are enriched in low complexity; the sequence is TQGDSGPQGPPGSE. Positions 175 to 186 are enriched in basic and acidic residues; the sequence is PKEERDRYRGEP. The triple-helical region stretch occupies residues 184–1484; it reads GEPGEPGLVG…SPGLPGMPGR (1301 aa). Pro residues-rich tracts occupy residues 215 to 224 and 433 to 445; these read RPGPPGPPGP and PPGP…PPGP. Composition is skewed to basic and acidic residues over residues 511-520 and 571-582; these read PGRKGDRGDP and KGDDGSPGRDGL. Composition is skewed to low complexity over residues 628 to 640 and 698 to 710; these read LKGQ…DAGL and TGAK…PGFA. Positions 711–720 are enriched in gly residues; that stretch reads GADGGPGPRG. Positions 721-730 are enriched in low complexity; sequence LPGDAGREGF. Positions 752–766 are enriched in pro residues; the sequence is DGSPGPIGLPGPDGP. Low complexity-rich tracts occupy residues 769 to 778, 813 to 823, 831 to 844, 1302 to 1328, and 1400 to 1421; these read ERGLPGEVLG, MPGMPGLKGQP, QPGL…HGFP, GSAA…KGWA, and QPGT…EMGP. The Collagen IV NC1 domain maps to 1489 to 1712; that stretch reads GYLLVKHSQT…SRCQVCMKNL (224 aa). At Y1490 the chain carries 3'-bromotyrosine. Cystine bridges form between C1504-C1593, C1537-C1590, C1549-C1555, C1612-C1708, C1646-C1705, and C1658-C1665.

This sequence belongs to the type IV collagen family. There are six type IV collagen isoforms, alpha 1(IV)-alpha 6(IV), each of which can form a triple helix structure with 2 other chains to generate type IV collagen network. Interacts with EFEMP2. Prolines at the third position of the tripeptide repeating unit (G-X-Y) are hydroxylated in some or all of the chains. Post-translationally, type IV collagens contain numerous cysteine residues which are involved in inter- and intramolecular disulfide bonding. 12 of these, located in the NC1 domain, are conserved in all known type IV collagens. In terms of processing, the trimeric structure of the NC1 domains is stabilized by covalent bonds between Lys and Met residues. Proteolytic processing produces the C-terminal NC1 peptide, canstatin.

The protein resides in the secreted. The protein localises to the extracellular space. It localises to the extracellular matrix. Its subcellular location is the basement membrane. In terms of biological role, type IV collagen is the major structural component of glomerular basement membranes (GBM), forming a 'chicken-wire' meshwork together with laminins, proteoglycans and entactin/nidogen. Functionally, canstatin, a cleavage product corresponding to the collagen alpha 2(IV) NC1 domain, possesses both anti-angiogenic and anti-tumor cell activity. It inhibits proliferation and migration of endothelial cells, reduces mitochondrial membrane potential, and induces apoptosis. Specifically induces Fas-dependent apoptosis and activates procaspase-8 and -9 activity. Ligand for alphavbeta3 and alphavbeta5 integrins. This Homo sapiens (Human) protein is Collagen alpha-2(IV) chain.